We begin with the raw amino-acid sequence, 84 residues long: Translational regulator CsrA (84 aa).

The protein belongs to the CsrA/RsmA family. In terms of assembly, homodimer; the beta-strands of each monomer intercalate to form a hydrophobic core, while the alpha-helices form wings that extend away from the core.

Its subcellular location is the cytoplasm. Its function is as follows. A translational regulator that binds mRNA to regulate translation initiation and/or mRNA stability. Usually binds in the 5'-UTR at or near the Shine-Dalgarno sequence preventing ribosome-binding, thus repressing translation. Its main target seems to be the major flagellin gene, while its function is anatagonized by FliW. This chain is Translational regulator CsrA, found in Leptospira borgpetersenii serovar Hardjo-bovis (strain JB197).